The chain runs to 146 residues: Catabolic 3-dehydroquinase (146 aa).

The Proton acceptor role is filled by Y24. The substrate site is built by N78, H84, and D91. The active-site Proton donor is the H104. Substrate contacts are provided by residues 105–106 (IT) and R115.

Belongs to the type-II 3-dehydroquinase family. In terms of assembly, homododecamer. Adopts a ring-like structure, composed of an arrangement of two hexameric rings stacked on top of one another.

The catalysed reaction is 3-dehydroquinate = 3-dehydroshikimate + H2O. The protein operates within aromatic compound metabolism; 3,4-dihydroxybenzoate biosynthesis; 3,4-dihydroxybenzoate from 3-dehydroquinate: step 1/2. Its function is as follows. Is involved in the catabolism of quinate. Allows the utilization of quinate as carbon source via the beta-ketoadipate pathway. This is Catabolic 3-dehydroquinase from Meyerozyma guilliermondii (strain ATCC 6260 / CBS 566 / DSM 6381 / JCM 1539 / NBRC 10279 / NRRL Y-324) (Yeast).